We begin with the raw amino-acid sequence, 198 residues long: Cerebellin-4 (198 aa).

An N-terminal signal peptide occupies residues 1-24 (MGSARRALSVVPAVLLILVLPVWA). N-linked (GlcNAc...) asparagine glycosylation is found at N26 and N85. Positions 63-198 (AANSKVAFSA…TFSGFLVFPL (136 aa)) constitute a C1q domain.

Homohexamer; disulfide-linked homotrimers. The trimers are assembled via the globular C1q domains. The trimers associate via N-terminal cysteine residues to form disulfide-linked hexamers. May form oligomers with CBLN1, CBLN2 and CBLN3 prior to secretion. Once secreted, does not interact with other CBLN family members. Strongly interacts with DCC in a NTN1-displaceable fashion. Weakly binds to NRXN1 and NRXN2 long and short isoforms produced by alternative promoter usage. Interaction with NRXN3 short isoform is hardly detectable; no interaction at all with NRXN3 long isoform. Does not interact with NEO1, GRID1 and GRID2. In terms of processing, sialoglycoprotein. Expressed in brain with high levels in particular thalamic nuclei. In the thalamus, predominantly expressed in neurons within the parafascicular nucleus. Found in the hippocampus, mostly in the dendrites and somata of pyramidal neurons (at protein level). Very low or no expression in most other brain regions. Highly expressed in the ventral medial habenula.

It localises to the secreted. Its subcellular location is the synapse. In terms of biological role, acts as a synaptic organizer in specific subsets of neurons in the brain. Essential for the formation and maintenance of inhibitory GABAergic synapses. Promotes the development of dendrite-targeting inhibitory GABAergic synapses made by somatostatin-positive interneurons. May contribute to the function of ventral medial habenula region of the brain implicated in the regulation of anxiety-related behaviors. May play a role in CBLN3 export from the endoplasmic reticulum and secretion. The protein is Cerebellin-4 (Cbln4) of Mus musculus (Mouse).